A 490-amino-acid chain; its full sequence is Lignostilbene-alpha,beta-dioxygenase isozyme III (490 aa).

The Fe cation site is built by His167, His218, His285, and His477.

The protein belongs to the carotenoid oxygenase family. In terms of assembly, homodimer of two beta subunits. Fe(2+) serves as cofactor.

The enzyme catalyses 1,2-bis(4-hydroxy-3-methoxyphenyl)ethylene + O2 = 2 vanillin. Its activity is regulated as follows. Activity is high with beta-5 type stilbene and minimal with beta-1 type stilbene. A 4-hydroxyl group and trans-stilbene structure is essential for the binding of substrates to the enzyme. In terms of biological role, catalyzes the cleavage of the interphenyl double bond (C alpha-C beta) of lignin-derived polyphenolic diaryl-propane type compounds (Stilbene). This Sphingomonas paucimobilis (Pseudomonas paucimobilis) protein is Lignostilbene-alpha,beta-dioxygenase isozyme III.